Here is a 202-residue protein sequence, read N- to C-terminus: MTTLLLVHSSARTGGSRTREMADILTAEWHARGDNHQVRVVDLADTPPPHVDAATIRHFFGLAGAEEPATASLALSDTWIEQLLQADALAFAVPMYNFSLPSTLKAWLDHVIRPRRTFRKVADGELEGLAGPKPALVMTASGGLFADTSLDHLRPYMKTALAFMGIDSPRFVDWEGTARADIDPAAQRRTVTAQLREWVHAC.

Residues S10 and 95–98 (MYNF) contribute to the FMN site.

This sequence belongs to the azoreductase type 1 family. Homodimer. FMN serves as cofactor.

It carries out the reaction 2 a quinone + NADH + H(+) = 2 a 1,4-benzosemiquinone + NAD(+). The catalysed reaction is N,N-dimethyl-1,4-phenylenediamine + anthranilate + 2 NAD(+) = 2-(4-dimethylaminophenyl)diazenylbenzoate + 2 NADH + 2 H(+). In terms of biological role, quinone reductase that provides resistance to thiol-specific stress caused by electrophilic quinones. Functionally, also exhibits azoreductase activity. Catalyzes the reductive cleavage of the azo bond in aromatic azo compounds to the corresponding amines. The protein is FMN-dependent NADH:quinone oxidoreductase of Alkalilimnicola ehrlichii (strain ATCC BAA-1101 / DSM 17681 / MLHE-1).